The following is a 392-amino-acid chain: uncharacterized protein (392 aa).

Helical transmembrane passes span 2–23 (WLANFFVSASTTMIVPFLSLYI), 38–60 (SGYVFGITFLMAFLVSPFWGRFG), 73–95 (GTGIALSIFFMGFVTSVYQLFFL), 153–175 (FTYTFFITSFVIFSSVLLVLFGV), 195–217 (VLSYIFHHPALWVMMLLTMLIQT), 237–259 (VNLAFFSGMAFSATGLGSLLLAR), 272–291 (RILIGLLLAASFFFIPQALA), 297–319 (LLVFRFLFGMAMGGLLPCITAAI), 331–353 (VLGYNVSFRFLGNVLGPLLGGII), and 357–379 (FTISATFYVTAFLFFAGACMLWI).

Belongs to the major facilitator superfamily.

The protein localises to the cell membrane. This is an uncharacterized protein from Bacillus subtilis (strain 168).